The sequence spans 279 residues: DegV domain-containing protein SACOL1460 (279 aa).

The DegV domain maps to 4 to 278 (QIIVTDSTSD…QGAIGLVVLK (275 aa)). The hexadecanoate site is built by Thr-61 and Ser-93.

Functionally, may bind long-chain fatty acids, such as palmitate, and may play a role in lipid transport or fatty acid metabolism. In Staphylococcus aureus (strain COL), this protein is DegV domain-containing protein SACOL1460.